Consider the following 545-residue polypeptide: MAKRIIYNEQARRALERGIDILAESVAVTLGPKGRNVVLEKKFGAPQIINDGVTIAKEIELEDHIENTGVALIRQAASKTNDAAGDGTTTATVLAHAMVKAGLRNVAAGANAITLKKGIDKATEFLVGKIQENSKPISDSNAIAQCGTIAAGNDDEVGQMIANAMDKVGKEGVISLEEGKSMTTELEVTEGMRFDKGYISPYFATDTERMEAVLDEPYILLTDKKIALVQDLVPVLEQIAKTGKPLVIIAEDIEKEALATLVVNRLRGVLNVAAVKAPGFGDRRKAMLEDMAVLTNGQLITEDAGLKLENATLDMLGTGRRITINKETTTIVAEGNEQAVKARCDQIKKQMDETDSSYDKEKLQERLAKLAGGVAVIKVGAATETEMKDKKLRLEDAINATKAAVEEGIVPGGGTTLAHLSPILKEWADKNLEGEELIGANIVEASLTAPLMRIAENAGSNGAVIAENVKSKPFNDGFNAATGEYVDMSSAGIVDPAKVTRSGLQNAASIAGMVLTTECIVADLPEKKDAATPGGAPGMGGDFDY.

Residues 29 to 32 (TLGP), 86 to 90 (DGTTT), Gly-413, 479 to 481 (NAA), and Asp-495 contribute to the ATP site.

This sequence belongs to the chaperonin (HSP60) family. As to quaternary structure, forms a cylinder of 14 subunits composed of two heptameric rings stacked back-to-back. Interacts with the co-chaperonin GroES.

It localises to the cytoplasm. It catalyses the reaction ATP + H2O + a folded polypeptide = ADP + phosphate + an unfolded polypeptide.. Together with its co-chaperonin GroES, plays an essential role in assisting protein folding. The GroEL-GroES system forms a nano-cage that allows encapsulation of the non-native substrate proteins and provides a physical environment optimized to promote and accelerate protein folding. The chain is Chaperonin GroEL 2 from Prochlorococcus marinus (strain MIT 9312).